A 635-amino-acid chain; its full sequence is Peptidyl-prolyl cis-trans isomerase PASTICCINO1 (635 aa).

Residues 1-10 are compositionally biased toward polar residues; that stretch reads MAVGDQTEQN. Positions 1–28 are disordered; that stretch reads MAVGDQTEQNYLPKKKKSETEDDKRRKK. PPIase FKBP-type domains are found at residues 51-147, 175-260, and 291-383; these read GDQV…LDFS, PYEV…VHFI, and DSRL…LGFE. TPR repeat units lie at residues 400–433, 449–482, and 483–516; these read ADKIRSTGNRLFKEGKFELAKAKYEKVLREFNHV, NMLHLNVAACLLKMGEWRKSIETCNKVLEAKPGH, and VKGLYRRGMAYIAGGEYDDARNDFNMMIKVDKSS. The interval 530–546 is calmodulin-binding; sequence KEQEAESKARKQFKGLF. Residues 569–586 are compositionally biased toward acidic residues; that stretch reads EVDETKDNDDDETLEEEG. Residues 569–593 form a disordered region; sequence EVDETKDNDDDETLEEEGATTVSTE. A helical; Anchor for type IV membrane protein membrane pass occupies residues 609 to 629; the sequence is VMLQIGIQLGVVLIGILIFQF.

This sequence belongs to the FKBP-type PPIase family. In terms of assembly, interacts with calmodulin (CaM). Interacts with RPM1 and NAC089. Interacts with the elongase complex core members KCR1, PAS2 and CER10. As to expression, expressed ubiquitously.

The protein resides in the endoplasmic reticulum membrane. Its subcellular location is the cytoplasm. The protein localises to the nucleus. The enzyme catalyses [protein]-peptidylproline (omega=180) = [protein]-peptidylproline (omega=0). Its function is as follows. PPIases accelerate the folding of proteins. It catalyzes the cis-trans isomerization of proline imidic peptide bonds in oligopeptides. Essential protein regulating cell division, adhesion and elongation throughout the plant development and embryogenesis. Required for the spatial organization of apical meristems. Involved in the hormonal control of cell division and differentiation mediated by cytokinins and auxin. Regulates the function of NAC089 transcription factor by controlling its targeting to the nucleus upon plant cell division. Interacts with enzymes of the fatty acid elongase complex and favors the generation of very-long-chain fatty acids (VLCFAs) required for polar auxin transport and tissue patterning during plant development. The protein is Peptidyl-prolyl cis-trans isomerase PASTICCINO1 (PAS1) of Arabidopsis thaliana (Mouse-ear cress).